The chain runs to 192 residues: uncharacterized protein (192 aa).

Residues 168 to 192 (PLWRKSEAGSRKARTSNSGGPTKRA) are disordered. A compositionally biased stretch (polar residues) spans 182 to 192 (TSNSGGPTKRA).

It to A.xylinum IS1268 ORFA.

This is an uncharacterized protein from Sinorhizobium fredii (strain NBRC 101917 / NGR234).